The sequence spans 514 residues: Na(+)/H(+) antiporter NhaB (514 aa).

The next 12 helical transmembrane spans lie at 23–43, 63–83, 97–117, 120–140, 144–164, 202–222, 238–258, 303–323, 357–377, 391–411, 447–467, and 475–495; these read LALL…PFIA, PLLP…TSAA, LLLM…LFIF, LLLS…AAAF, FLDA…FYGI, LMMH…VGEP, FFLR…LTCM, AVIG…VGLI, LTVF…APII, LFYL…VGTI, ATPN…APLI, and VWMA…CVEF.

It belongs to the NhaB Na(+)/H(+) (TC 2.A.34) antiporter family.

Its subcellular location is the cell inner membrane. The enzyme catalyses 2 Na(+)(in) + 3 H(+)(out) = 2 Na(+)(out) + 3 H(+)(in). Na(+)/H(+) antiporter that extrudes sodium in exchange for external protons. This is Na(+)/H(+) antiporter NhaB from Salmonella choleraesuis (strain SC-B67).